The sequence spans 155 residues: SsrA-binding protein (155 aa).

It belongs to the SmpB family.

It is found in the cytoplasm. Functionally, required for rescue of stalled ribosomes mediated by trans-translation. Binds to transfer-messenger RNA (tmRNA), required for stable association of tmRNA with ribosomes. tmRNA and SmpB together mimic tRNA shape, replacing the anticodon stem-loop with SmpB. tmRNA is encoded by the ssrA gene; the 2 termini fold to resemble tRNA(Ala) and it encodes a 'tag peptide', a short internal open reading frame. During trans-translation Ala-aminoacylated tmRNA acts like a tRNA, entering the A-site of stalled ribosomes, displacing the stalled mRNA. The ribosome then switches to translate the ORF on the tmRNA; the nascent peptide is terminated with the 'tag peptide' encoded by the tmRNA and targeted for degradation. The ribosome is freed to recommence translation, which seems to be the essential function of trans-translation. This chain is SsrA-binding protein, found in Bacillus cytotoxicus (strain DSM 22905 / CIP 110041 / 391-98 / NVH 391-98).